We begin with the raw amino-acid sequence, 403 residues long: DNA replication and repair protein RecF (403 aa).

30–37 (GSNGLGKT) lines the ATP pocket.

This sequence belongs to the RecF family.

Its subcellular location is the cytoplasm. Functionally, the RecF protein is involved in DNA metabolism; it is required for DNA replication and normal SOS inducibility. RecF binds preferentially to single-stranded, linear DNA. It also seems to bind ATP. The protein is DNA replication and repair protein RecF of Bifidobacterium adolescentis (strain ATCC 15703 / DSM 20083 / NCTC 11814 / E194a).